The chain runs to 102 residues: Small ribosomal subunit protein uS10 (102 aa).

It belongs to the universal ribosomal protein uS10 family. In terms of assembly, part of the 30S ribosomal subunit.

Functionally, involved in the binding of tRNA to the ribosomes. In Methanobrevibacter smithii (strain ATCC 35061 / DSM 861 / OCM 144 / PS), this protein is Small ribosomal subunit protein uS10.